Reading from the N-terminus, the 31-residue chain is Cytochrome b6-f complex subunit 6 (31 aa).

Residues 3-23 form a helical membrane-spanning segment; it reads IAIDYFLLVGFCFAFTSGLYL.

This sequence belongs to the PetL family. As to quaternary structure, the 4 large subunits of the cytochrome b6-f complex are cytochrome b6, subunit IV (17 kDa polypeptide, PetD), cytochrome f and the Rieske protein, while the 4 small subunits are PetG, PetL, PetM and PetN. The complex functions as a dimer.

It is found in the plastid. The protein resides in the chloroplast thylakoid membrane. Its function is as follows. Component of the cytochrome b6-f complex, which mediates electron transfer between photosystem II (PSII) and photosystem I (PSI), cyclic electron flow around PSI, and state transitions. PetL is important for photoautotrophic growth as well as for electron transfer efficiency and stability of the cytochrome b6-f complex. In Trieres chinensis (Marine centric diatom), this protein is Cytochrome b6-f complex subunit 6.